We begin with the raw amino-acid sequence, 1188 residues long: Zinc finger SWIM domain-containing protein 5 (1188 aa).

Residues 1–10 (MAEGGEREEL) show a composition bias toward basic and acidic residues. Disordered regions lie at residues 1 to 46 (MAEG…GAGG) and 123 to 171 (AGAA…TGTA). 2 stretches are compositionally biased toward low complexity: residues 126–136 (AAGAAGASPVE) and 146–155 (AAPAGSAPGA). Over residues 156–171 (AGAGSSPGLGAGTGTA) the composition is skewed to gly residues. The segment at 222-259 (YKVAISFDRCKITSVSCGCGNKDIFYCAHVVALSLYRI) adopts an SWIM-type zinc-finger fold.

This is Zinc finger SWIM domain-containing protein 5 (Zswim5) from Mus musculus (Mouse).